We begin with the raw amino-acid sequence, 284 residues long: Diaminopimelate epimerase (284 aa).

Positions 14 and 67 each coordinate substrate. The Proton donor role is filled by Cys76. Substrate-binding positions include 77–78 (GN), Asn166, Asn199, and 217–218 (ER). The active-site Proton acceptor is Cys226. Residue 227-228 (GT) participates in substrate binding.

Belongs to the diaminopimelate epimerase family. As to quaternary structure, homodimer.

It localises to the cytoplasm. The enzyme catalyses (2S,6S)-2,6-diaminopimelate = meso-2,6-diaminopimelate. It participates in amino-acid biosynthesis; L-lysine biosynthesis via DAP pathway; DL-2,6-diaminopimelate from LL-2,6-diaminopimelate: step 1/1. Its function is as follows. Catalyzes the stereoinversion of LL-2,6-diaminopimelate (L,L-DAP) to meso-diaminopimelate (meso-DAP), a precursor of L-lysine and an essential component of the bacterial peptidoglycan. The sequence is that of Diaminopimelate epimerase from Geobacillus sp. (strain WCH70).